The sequence spans 318 residues: tRNA U34 carboxymethyltransferase (318 aa).

Residues K88, W102, K107, G126, 176 to 177 (LE), M192, Y196, and R311 each bind carboxy-S-adenosyl-L-methionine.

It belongs to the class I-like SAM-binding methyltransferase superfamily. CmoB family. In terms of assembly, homotetramer.

It catalyses the reaction carboxy-S-adenosyl-L-methionine + 5-hydroxyuridine(34) in tRNA = 5-carboxymethoxyuridine(34) in tRNA + S-adenosyl-L-homocysteine + H(+). Catalyzes carboxymethyl transfer from carboxy-S-adenosyl-L-methionine (Cx-SAM) to 5-hydroxyuridine (ho5U) to form 5-carboxymethoxyuridine (cmo5U) at position 34 in tRNAs. This Pseudomonas putida (strain W619) protein is tRNA U34 carboxymethyltransferase.